The chain runs to 4303 residues: Polycystin-1 (4303 aa).

The signal sequence occupies residues 1–23; sequence MPPAAPARLALALGLGLWLGALA. The 44-residue stretch at 24–67 folds into the LRRNT domain; sequence GGPGRGCGPCEPPCLCGPAPGAACRVNCSGRGLRTLGPALRIPA. The Extracellular portion of the chain corresponds to 24–3074; it reads GGPGRGCGPC…VFPEPTADVN (3051 aa). 2 N-linked (GlcNAc...) asparagine glycosylation sites follow: Asn-50 and Asn-89. LRR repeat units follow at residues 68 to 91 and 92 to 113; these read DATA…ANLS and ALAE…IFAN. 2 N-linked (GlcNAc...) asparagine glycosylation sites follow: Asn-116 and Asn-121. Residues 125–178 enclose the LRRCT domain; the sequence is NPFECDCGLAWLPRWAEEQQVRVVQPEAATCAGPGSLAGQPLLGIPLLDSGCGE. In terms of domain architecture, WSC spans 177–271; it reads GEEYVACLPD…PTLLQHVFPA (95 aa). A glycan (N-linked (GlcNAc...) asparagine) is linked at Asn-187. Residues 272 to 359 enclose the PKD 1 domain; the sequence is SPGATLVGPH…VQVEAAPAAL (88 aa). A C-type lectin domain is found at 415 to 531; that stretch reads GNGHCYRLVV…CSAPHSYVCE (117 aa). 2 disulfide bridges follow: Cys-436–Cys-530 and Cys-508–Cys-522. A disordered region spans residues 616–635; the sequence is AGTPENGSEPESRSPDNRTQ. Asn-621 and Asn-632 each carry an N-linked (GlcNAc...) asparagine glycan. One can recognise an LDL-receptor class A; atypical domain in the interval 638 to 671; sequence PACMPGGRWCPGANICLPLDASCHPQACANGCTS. 3 disulfides stabilise this stretch: Cys-640/Cys-653, Cys-647/Cys-665, and Cys-660/Cys-669. Positions 743–817 constitute a PKD 2 domain; that stretch reads LSANASSWLP…RHNLSCSFDV (75 aa). 32 N-linked (GlcNAc...) asparagine glycosylation sites follow: Asn-746, Asn-810, Asn-841, Asn-854, Asn-890, Asn-921, Asn-1004, Asn-1010, Asn-1034, Asn-1072, Asn-1113, Asn-1178, Asn-1194, Asn-1240, Asn-1269, Asn-1336, Asn-1348, Asn-1382, Asn-1450, Asn-1455, Asn-1474, Asn-1518, Asn-1541, Asn-1554, Asn-1563, Asn-1647, Asn-1661, Asn-1733, Asn-1791, Asn-1834, Asn-1867, and Asn-1880. PKD domains are found at residues 855–928, 935–1020, 1023–1129, 1127–1215, 1213–1298, 1294–1383, 1382–1469, 1468–1551, 1550–1635, 1634–1721, 1719–1805, 1807–1890, 1889–1974, 1977–2057, and 2060–2148; these read ATAT…RVTA, LRAT…NRMQ, QVST…LPSV, PSVA…LRGL, RGLS…EVLR, LEVL…VGNV, NVTL…VLVT, VTSI…VRGL, GLVV…IEGL, GLQV…VGWL, GWLM…VSGL, IRAS…IVGL, GLVL…VSGL, PNCC…VLEV, and AVQY…ACRE. 18 N-linked (GlcNAc...) asparagine glycosylation sites follow: Asn-1991, Asn-2050, Asn-2074, Asn-2125, Asn-2248, Asn-2353, Asn-2395, Asn-2412, Asn-2567, Asn-2578, Asn-2645, Asn-2718, Asn-2754, Asn-2841, Asn-2878, Asn-2925, Asn-2956, and Asn-2994. The 688-residue stretch at 2146–2833 folds into the REJ domain; the sequence is CREPEVDVVL…QLIFLVDSNP (688 aa). A GAIN-B domain is found at 2862 to 3063; that stretch reads PIERLASERA…SLFVPPSHVR (202 aa). A disulfide bond links Cys-3015 and Cys-3043. Residues 3015-3063 form a GPS region; that stretch reads CQYFSEEDMVWRTEGLLPLEETSPRQAVCLTRHLTAFGASLFVPPSHVR. A helical membrane pass occupies residues 3075–3095; it reads YIVMLTCAVCLVTYMVMAAIL. The Cytoplasmic portion of the chain corresponds to 3096–3277; it reads HKLDQLDASR…DRPPRSRFTR (182 aa). The PLAT domain occupies 3118–3233; the sequence is FKYEILVKTG…EANGGLVEKE (116 aa). The helical transmembrane segment at 3278 to 3298 threads the bilayer; it reads IQRATCCVLLICLFLGANAVW. Over 3299-3323 the chain is Extracellular; sequence YGAVGDSAYSTGHVSRLSPLSVDTV. The chain crosses the membrane as a helical span at residues 3324–3344; sequence AVGLVSSVVVYPVYLAILFLF. Topologically, residues 3345–3559 are cytoplasmic; it reads RMSRSKVAGS…LPAWCASLAH (215 aa). Residues 3560-3580 form a helical membrane-spanning segment; that stretch reads GLSLLLVAVAVAVSGWVGASF. The Extracellular segment spans residues 3581–3582; sequence PP. The chain crosses the membrane as a helical span at residues 3583–3603; sequence GVSVAWLLSSSASFLASFLGW. Residues 3604-3665 are Cytoplasmic-facing; that stretch reads EPLKVLLEAL…LAKEEARKVK (62 aa). Residues 3666–3686 traverse the membrane as a helical segment; it reads RLHGMLRSLLVYMLFLLVTLL. The Extracellular segment spans residues 3687 to 3901; sequence ASYGDASCHG…RLSAGLSLPL (215 aa). N-linked (GlcNAc...) asparagine glycans are attached at residues Asn-3738, Asn-3790, and Asn-3845. Residues 3902 to 3922 form a helical membrane-spanning segment; the sequence is LTSVCLLLFAVHFAVAEARTW. Residues 3923-3935 lie on the Cytoplasmic side of the membrane; sequence HREGRWRVLRLGA. A helical membrane pass occupies residues 3936-3956; that stretch reads WARWLLVALTAATALVRLAQL. Residues 3957-3984 lie on the Extracellular side of the membrane; that stretch reads GAADRQWTRFVRGRPRRFTSFDQVAQLS. A helical membrane pass occupies residues 3985-4005; that stretch reads SAARGLAASLLFLLLVKAAQQ. At 4006–4027 the chain is on the cytoplasmic side; the sequence is LRFVRQWSVFGKTLCRALPELL. The chain crosses the membrane as a helical span at residues 4028 to 4048; sequence GVTLGLVVLGVAYAQLAILLV. Over 4049–4090 the chain is Extracellular; it reads SSCVDSLWSVAQALLVLCPGTGLSTLCPAESWHLSPLLCVGL. The helical transmembrane segment at 4091–4110 threads the bilayer; it reads WALRLWGALRLGAVILRWRY. The Cytoplasmic portion of the chain corresponds to 4111 to 4303; that stretch reads HALRGELYRP…AKNKVHPSST (193 aa). Disordered regions lie at residues 4160-4196 and 4243-4303; these read PLPS…QLDG and LHSL…PSST. A Phosphoserine; by PRKX; in vitro modification is found at Ser-4166. Positions 4185 to 4195 are enriched in polar residues; the sequence is SHPSTSSSQLD. The stretch at 4220-4251 forms a coiled coil; the sequence is EALLTQFDRLNQATEDVYQLEQQLHSLQGRRS. Residues 4253 to 4269 are compositionally biased toward low complexity; that stretch reads RAPAGSSRGPSPGLRPA. Positions 4292-4303 are enriched in basic residues; that stretch reads LRAKNKVHPSST.

It belongs to the polycystin family. In terms of assembly, component of the heterotetrameric polycystin channel complex with PKD2; the tetramer contains one PKD1 chain and three PKD2 chains. Interacts with PKD2; the interaction is required for ciliary localization. Interacts with PKD2L1. Interacts with PRKX; involved in differentiation and controlled morphogenesis of the kidney. Interacts (via extracellular domain) with WNT3A, WNT4, WNT5A and WNT9B. Interacts with DVL1 and DVL2. Interacts with NPHP1 (via SH3 domain). Interacts with BBS1, BBS4, BBS5 and TTC8. Interacts with RGS7. Interacts (via the PKD repeats in the N-terminal extracellular region) with EPCIP; the interaction is not dependent on N-glycosylation of either protein. In terms of processing, N-glycosylated. Post-translationally, after synthesis, undergoes cleavage between Leu-3048 and Thr-3049 in the GPS region of the GAIN-B domain. Cleavage at the GPS region occurs through a cis-autoproteolytic mechanism involving an ester-intermediate via N-O acyl rearrangement. This process takes place in the early secretory pathway, depends on initial N-glycosylation, and requires the REJ domain. There is evidence that cleavage at GPS region is incomplete. Uncleaved and cleaved products may have different functions in vivo.

Its subcellular location is the cell membrane. The protein localises to the cell projection. It localises to the cilium. The protein resides in the endoplasmic reticulum. It is found in the golgi apparatus. Its subcellular location is the vesicle. The protein localises to the secreted. It localises to the extracellular exosome. Functionally, component of a heteromeric calcium-permeable ion channel formed by PKD1 and PKD2 that is activated by interaction between PKD1 and a Wnt family member, such as WNT3A and WNT9B. Both PKD1 and PKD2 are required for channel activity. Involved in renal tubulogenesis. Involved in fluid-flow mechanosensation by the primary cilium in renal epithelium. Acts as a regulator of cilium length, together with PKD2. The dynamic control of cilium length is essential in the regulation of mechanotransductive signaling. The cilium length response creates a negative feedback loop whereby fluid shear-mediated deflection of the primary cilium, which decreases intracellular cAMP, leads to cilium shortening and thus decreases flow-induced signaling. May be an ion-channel regulator. Involved in adhesive protein-protein and protein-carbohydrate interactions. Likely to be involved with polycystin-1-interacting protein 1 in the detection, sequestration and exocytosis of senescent mitochondria. This Homo sapiens (Human) protein is Polycystin-1.